Here is a 480-residue protein sequence, read N- to C-terminus: Glutamate--tRNA ligase (480 aa).

The 'HIGH' region motif lies at 9-19; the sequence is PSPTGNLHIGT. The short motif at 247–251 is the 'KMSKS' region element; it reads KLSKR. Residue K250 coordinates ATP.

Belongs to the class-I aminoacyl-tRNA synthetase family. Glutamate--tRNA ligase type 1 subfamily. In terms of assembly, monomer.

Its subcellular location is the cytoplasm. The catalysed reaction is tRNA(Glu) + L-glutamate + ATP = L-glutamyl-tRNA(Glu) + AMP + diphosphate. Its function is as follows. Catalyzes the attachment of glutamate to tRNA(Glu) in a two-step reaction: glutamate is first activated by ATP to form Glu-AMP and then transferred to the acceptor end of tRNA(Glu). This is Glutamate--tRNA ligase from Nostoc sp. (strain PCC 7120 / SAG 25.82 / UTEX 2576).